The chain runs to 101 residues: U1-sicaritoxin-Li1a (101 aa).

Positions 1-19 (MRFLVGAVLVVVLVACATA) are cleaved as a signal peptide. The propeptide occupies 20-35 (FESDAETFKSLVVEER). 4 disulfides stabilise this stretch: cysteine 37-cysteine 54, cysteine 45-cysteine 59, cysteine 53-cysteine 72, and cysteine 61-cysteine 70. Lysine 81 is subject to Lysine amide. The propeptide occupies 85 to 101 (ALLLPVETHRLLFPEQW).

The protein belongs to the neurotoxin 28 (Litx) family. Expressed by the venom gland.

Its subcellular location is the secreted. Functionally, toxin active against insects (S.frugiperda larvae). May act on sodium (Nav) or calcium channels (Cav). This is U1-sicaritoxin-Li1a from Loxosceles intermedia (Brown spider).